Reading from the N-terminus, the 410-residue chain is Histidine--tRNA ligase (410 aa).

Belongs to the class-II aminoacyl-tRNA synthetase family.

It localises to the cytoplasm. It catalyses the reaction tRNA(His) + L-histidine + ATP = L-histidyl-tRNA(His) + AMP + diphosphate + H(+). This chain is Histidine--tRNA ligase, found in Methanocorpusculum labreanum (strain ATCC 43576 / DSM 4855 / Z).